The chain runs to 598 residues: Thiol:disulfide interchange protein DsbD (598 aa).

The first 19 residues, methionine 1–alanine 19, serve as a signal peptide directing secretion. Cysteine 122 and cysteine 128 are disulfide-bonded. The tract at residues aspartate 147–alanine 187 is disordered. The segment covering phenylalanine 165–alanine 176 has biased composition (pro residues). Helical transmembrane passes span leucine 197 to valine 217, leucine 242 to valine 262, tyrosine 277 to phenylalanine 297, isoleucine 330 to isoleucine 350, leucine 356 to leucine 376, tryptophan 391 to leucine 411, and leucine 423 to threonine 443. A disulfide bridge links cysteine 216 with cysteine 338. Residues leucine 459–alanine 598 form the Thioredoxin domain. Cysteine 513 and cysteine 516 are joined by a disulfide.

The protein belongs to the thioredoxin family. DsbD subfamily.

The protein localises to the cell inner membrane. The enzyme catalyses [protein]-dithiol + NAD(+) = [protein]-disulfide + NADH + H(+). It catalyses the reaction [protein]-dithiol + NADP(+) = [protein]-disulfide + NADPH + H(+). In terms of biological role, required to facilitate the formation of correct disulfide bonds in some periplasmic proteins and for the assembly of the periplasmic c-type cytochromes. Acts by transferring electrons from cytoplasmic thioredoxin to the periplasm. This transfer involves a cascade of disulfide bond formation and reduction steps. The chain is Thiol:disulfide interchange protein DsbD from Klebsiella pneumoniae subsp. pneumoniae (strain ATCC 700721 / MGH 78578).